The chain runs to 254 residues: 14-3-3-like protein RA215 (254 aa).

Belongs to the 14-3-3 family.

The polypeptide is 14-3-3-like protein RA215 (Solanum tuberosum (Potato)).